Consider the following 55-residue polypeptide: Accessory gland-specific peptide 70A (55 aa).

The N-terminal stretch at 1–19 is a signal peptide; it reads MKTLALFLVLVCVLGLVQS. The segment at 20 to 33 is essential for binding to sperm; it reads WEWPWNRKPTKFPI. Pro-28 and Pro-32 each carry hydroxyproline. Ile-33 bears the Isoleucine derivative mark. Pro-34, Pro-36, and Pro-38 each carry hydroxyproline. Positions 36–55 are sufficient to induce PMR; it reads PNPRDKWCRLNLGPAWGGRC. An intrachain disulfide couples Cys-43 to Cys-55.

This sequence belongs to the Drosophila sex peptide family. Post-translationally, sperm-bound protein is cleaved to release an active C-terminal peptide. Gradual release from stored sperm may function to prolong PMR and enhance male reproductive success. In terms of tissue distribution, main cells of the accessory glands of males (paragonial gland).

It is found in the secreted. Its function is as follows. Male seminal protein which triggers short- and long-term post-mating behavioral responses (PMR) in female Drosophila. Binds initially to sperm where it is later cleaved to release an active peptide within the female reproductive tract. Signals via the sex peptide receptor (SPR) in female flies; may also act via other receptors. Moderates the activity of distinct neuronal circuitries in the female genital tract to promote specific PMRs including: enhanced ovulation, increased egg laying rate, increased feeding/foraging rate, induced antimicrobial peptide synthesis, reduced mating receptivity, reduced day-time sleep and reduced lifespan in multiple mated females. In Drosophila melanogaster (Fruit fly), this protein is Accessory gland-specific peptide 70A (SP).